We begin with the raw amino-acid sequence, 372 residues long: Alanine dehydrogenase 2 (372 aa).

Residue His95 is part of the active site. 169–199 (KVTIIGGGQAGTNAAKIALGLGADVTILDVN) contributes to the NAD(+) binding site.

It belongs to the AlaDH/PNT family.

It catalyses the reaction L-alanine + NAD(+) + H2O = pyruvate + NH4(+) + NADH + H(+). It participates in amino-acid degradation; L-alanine degradation via dehydrogenase pathway; NH(3) and pyruvate from L-alanine: step 1/1. May play a role in cell wall synthesis as L-alanine is an important constituent of the peptidoglycan layer. This chain is Alanine dehydrogenase 2 (ald2), found in Staphylococcus aureus (strain N315).